The chain runs to 80 residues: Exodeoxyribonuclease 7 small subunit (80 aa).

This sequence belongs to the XseB family. In terms of assembly, heterooligomer composed of large and small subunits.

The protein resides in the cytoplasm. The enzyme catalyses Exonucleolytic cleavage in either 5'- to 3'- or 3'- to 5'-direction to yield nucleoside 5'-phosphates.. Its function is as follows. Bidirectionally degrades single-stranded DNA into large acid-insoluble oligonucleotides, which are then degraded further into small acid-soluble oligonucleotides. This is Exodeoxyribonuclease 7 small subunit from Rickettsia canadensis (strain McKiel).